Here is a 156-residue protein sequence, read N- to C-terminus: Small ribosomal subunit protein uS7 (156 aa).

Belongs to the universal ribosomal protein uS7 family. In terms of assembly, part of the 30S ribosomal subunit. Contacts proteins S9 and S11.

In terms of biological role, one of the primary rRNA binding proteins, it binds directly to 16S rRNA where it nucleates assembly of the head domain of the 30S subunit. Is located at the subunit interface close to the decoding center, probably blocks exit of the E-site tRNA. The protein is Small ribosomal subunit protein uS7 of Anaeromyxobacter dehalogenans (strain 2CP-C).